The following is a 164-amino-acid chain: 2-keto-3-deoxy-D-glycero-D-galacto-9-phosphonononic acid phosphatase (164 aa).

Residues Asp-10 and Asp-12 each coordinate Mg(2+). Substrate-binding positions include Thr-34, 54 to 56 (TGE), 64 to 67 (RAEK), and Lys-80. Asp-103 provides a ligand contact to Mg(2+). A substrate-binding site is contributed by Asn-106.

The protein belongs to the KdsC family. In terms of assembly, homotetramer. The cofactor is Mg(2+).

It carries out the reaction 3-deoxy-D-glycero-beta-D-galacto-non-2-ulopyranosonate 9-phosphate + H2O = 3-deoxy-D-glycero-beta-D-galacto-non-2-ulopyranosonate + phosphate. Its function is as follows. Involved in the biosynthesis of 2-keto-3-deoxy-D-glycero-D-galacto-nononic acid used in cell-wall polysaccharides. Catalyzes the hydrolysis of 2-keto-3-deoxy-D-glycero-D-galacto-9-phosphonononic acid (KDN-9-P) to yield 2-keto-3-deoxy-D-glycero-D-galacto-nononic acid (KDN). Also able to hydrolyze N-acetylneuraminate-9-phosphate (Neu5NAc-9-P), 2-keto-3-deoxy-D-manno-octulosonate-8-phosphate (KDO-8-P), phosphoenolpyruvate (PEP), gluconate 6-phosphate, tyrosine phosphate ester and glucose-6-P as substrate. The sequence is that of 2-keto-3-deoxy-D-glycero-D-galacto-9-phosphonononic acid phosphatase from Bacteroides thetaiotaomicron (strain ATCC 29148 / DSM 2079 / JCM 5827 / CCUG 10774 / NCTC 10582 / VPI-5482 / E50).